A 471-amino-acid polypeptide reads, in one-letter code: ATP synthase subunit beta (471 aa).

154–161 (GGAGVGKT) serves as a coordination point for ATP.

The protein belongs to the ATPase alpha/beta chains family. In terms of assembly, F-type ATPases have 2 components, CF(1) - the catalytic core - and CF(0) - the membrane proton channel. CF(1) has five subunits: alpha(3), beta(3), gamma(1), delta(1), epsilon(1). CF(0) has three main subunits: a(1), b(2) and c(9-12). The alpha and beta chains form an alternating ring which encloses part of the gamma chain. CF(1) is attached to CF(0) by a central stalk formed by the gamma and epsilon chains, while a peripheral stalk is formed by the delta and b chains.

It localises to the cell membrane. The catalysed reaction is ATP + H2O + 4 H(+)(in) = ADP + phosphate + 5 H(+)(out). In terms of biological role, produces ATP from ADP in the presence of a proton gradient across the membrane. The catalytic sites are hosted primarily by the beta subunits. The chain is ATP synthase subunit beta from Mesomycoplasma hyopneumoniae (strain J / ATCC 25934 / NCTC 10110) (Mycoplasma hyopneumoniae).